The following is a 364-amino-acid chain: Methylthioribose-1-phosphate isomerase (364 aa).

Substrate is bound by residues 51–53, Arg-88, and Gln-199; that span reads RGA. Asp-240 acts as the Proton donor in catalysis. Substrate is bound at residue 250-251; sequence NK.

Belongs to the eIF-2B alpha/beta/delta subunits family. MtnA subfamily.

It carries out the reaction 5-(methylsulfanyl)-alpha-D-ribose 1-phosphate = 5-(methylsulfanyl)-D-ribulose 1-phosphate. It functions in the pathway amino-acid biosynthesis; L-methionine biosynthesis via salvage pathway; L-methionine from S-methyl-5-thio-alpha-D-ribose 1-phosphate: step 1/6. In terms of biological role, catalyzes the interconversion of methylthioribose-1-phosphate (MTR-1-P) into methylthioribulose-1-phosphate (MTRu-1-P). The polypeptide is Methylthioribose-1-phosphate isomerase (Cereibacter sphaeroides (strain KD131 / KCTC 12085) (Rhodobacter sphaeroides)).